Here is a 78-residue protein sequence, read N- to C-terminus: Large ribosomal subunit protein bL28 (78 aa).

A disordered region spans residues 1–28; it reads MSRRCQVRGTKPEFGNNVSHSQRHTKRR.

It belongs to the bacterial ribosomal protein bL28 family.

The chain is Large ribosomal subunit protein bL28 from Cutibacterium acnes (strain DSM 16379 / KPA171202) (Propionibacterium acnes).